The following is a 94-amino-acid chain: Evasin P1086 (94 aa).

The first 28 residues, 1-28 (MAFNVITFLQLAVFVVILFNINLHSASA), serve as a signal peptide directing secretion. 3 disulfide bridges follow: Cys-48/Cys-67, Cys-52/Cys-69, and Cys-63/Cys-80. N-linked (GlcNAc...) asparagine glycosylation occurs at Asn-74.

It is found in the secreted. Its function is as follows. Salivary chemokine-binding protein which binds to host chemokines CXCL1, CXCL2, CXCL3, CXCL5, CXCL6, CXCL10, CXCL12 and CXCL13. The chain is Evasin P1086 from Ixodes ricinus (Common tick).